Consider the following 469-residue polypeptide: tRNA-2-methylthio-N(6)-dimethylallyladenosine synthase (469 aa).

The region spanning 22 to 142 (RKVFIKTYGC…LPEALRRAQQ (121 aa)) is the MTTase N-terminal domain. Positions 31, 67, 105, 183, 187, and 190 each coordinate [4Fe-4S] cluster. The 233-residue stretch at 169-401 (RARGVTAFLT…QALLLKQQQE (233 aa)) folds into the Radical SAM core domain. Residues 404-466 (ESCIGKEIDL…TNSLFAERAE (63 aa)) enclose the TRAM domain.

The protein belongs to the methylthiotransferase family. MiaB subfamily. As to quaternary structure, monomer. [4Fe-4S] cluster is required as a cofactor.

It is found in the cytoplasm. It carries out the reaction N(6)-dimethylallyladenosine(37) in tRNA + (sulfur carrier)-SH + AH2 + 2 S-adenosyl-L-methionine = 2-methylsulfanyl-N(6)-dimethylallyladenosine(37) in tRNA + (sulfur carrier)-H + 5'-deoxyadenosine + L-methionine + A + S-adenosyl-L-homocysteine + 2 H(+). Functionally, catalyzes the methylthiolation of N6-(dimethylallyl)adenosine (i(6)A), leading to the formation of 2-methylthio-N6-(dimethylallyl)adenosine (ms(2)i(6)A) at position 37 in tRNAs that read codons beginning with uridine. The protein is tRNA-2-methylthio-N(6)-dimethylallyladenosine synthase of Rhizobium etli (strain CIAT 652).